The chain runs to 1224 residues: DNA-directed RNA polymerase subunit beta'' (1224 aa).

Zn(2+) is bound by residues cysteine 223, cysteine 297, cysteine 304, and cysteine 307.

It belongs to the RNA polymerase beta' chain family. RpoC2 subfamily. As to quaternary structure, in plastids the minimal PEP RNA polymerase catalytic core is composed of four subunits: alpha, beta, beta', and beta''. When a (nuclear-encoded) sigma factor is associated with the core the holoenzyme is formed, which can initiate transcription. Zn(2+) serves as cofactor.

The protein localises to the plastid. It is found in the chloroplast. It catalyses the reaction RNA(n) + a ribonucleoside 5'-triphosphate = RNA(n+1) + diphosphate. Functionally, DNA-dependent RNA polymerase catalyzes the transcription of DNA into RNA using the four ribonucleoside triphosphates as substrates. The chain is DNA-directed RNA polymerase subunit beta'' from Porphyra purpurea (Red seaweed).